The chain runs to 362 residues: Beta-ketoacyl-[acyl-carrier-protein] synthase III 2 (362 aa).

Active-site residues include Cys113 and His251. Residues 252-256 (QANIR) form an ACP-binding region. Residue Asn281 is part of the active site.

It belongs to the thiolase-like superfamily. FabH family. As to quaternary structure, homodimer.

Its subcellular location is the cytoplasm. It catalyses the reaction malonyl-[ACP] + acetyl-CoA + H(+) = 3-oxobutanoyl-[ACP] + CO2 + CoA. Its pathway is lipid metabolism; fatty acid biosynthesis. In terms of biological role, catalyzes the condensation reaction of fatty acid synthesis by the addition to an acyl acceptor of two carbons from malonyl-ACP. Catalyzes the first condensation reaction which initiates fatty acid synthesis and may therefore play a role in governing the total rate of fatty acid production. Possesses both acetoacetyl-ACP synthase and acetyl transacylase activities. Its substrate specificity determines the biosynthesis of branched-chain and/or straight-chain of fatty acids. In Vibrio vulnificus (strain YJ016), this protein is Beta-ketoacyl-[acyl-carrier-protein] synthase III 2.